The sequence spans 722 residues: Capsid protein VP1 (722 aa).

The segment at 14–59 (YLGPGNSLDQGEPTNPSDAAAKEHDEAYAAYLRSGKNPYLYFSPAD) is phospholipase A2-like. Disordered stretches follow at residues 90-115 (VLTD…PPPH), 136-179 (LAPM…VGIS), and 497-531 (AGRG…TTGE). Residues 161–178 (SGNGSGGGGGGGSGGVGI) are compositionally biased toward gly residues.

Belongs to the parvoviridae capsid protein family.

The protein resides in the virion. Functionally, capsid protein self-assembles to form an icosahedral capsid with a T=1 symmetry, about 22 nm in diameter, and consisting of 60 copies of two size variants of the capsid proteins, VP1 and VP2, which differ by the presence of an N-terminal extension in the minor protein VP1. The capsid encapsulates the genomic ssDNA. Capsid proteins are responsible for the attachment to host cell receptors. This attachment induces virion internalization predominantly through clathrin-dependent endocytosis. Binding to the host receptors also induces capsid rearrangements leading to surface exposure of VP1 N-terminus, specifically its phospholipase A2-like region and putative nuclear localization signal(s). VP1 N-terminus might serve as a lipolytic enzyme to breach the endosomal membrane during entry into host cell and might contribute to virus transport to the nucleus. The polypeptide is Capsid protein VP1 (Neovison vison (American mink)).